The sequence spans 164 residues: Bacterial ferritin (164 aa).

Residues 1 to 147 (MKGKKSVISR…QQLGLIARMG (147 aa)) enclose the Ferritin-like diiron domain. Fe cation-binding residues include E18, E51, H54, E94, E129, and H132.

The protein belongs to the bacterioferritin family. In terms of assembly, heterooligomer of 24 subunits, arranged as 12 dimers, that are packed together to form an approximately spherical molecule with a central cavity, in which large amounts of iron can be deposited.

It catalyses the reaction 4 Fe(2+) + O2 + 4 H(+) = 4 Fe(3+) + 2 H2O. The catalysed reaction is Fe(2+)(in) = Fe(2+)(out). In terms of biological role, iron-storage protein, whose ferroxidase center binds Fe(2+), oxidizes it using dioxygen to Fe(3+), and participates in the subsequent Fe(3+) oxide mineral core formation within the central cavity of the BFR protein shell. This is Bacterial ferritin from Paramagnetospirillum magnetotacticum (Aquaspirillum magnetotacticum).